Reading from the N-terminus, the 138-residue chain is Large ribosomal subunit protein uL16 (138 aa).

The segment covering 1–13 (MLQPKRRKYRKEQ) has biased composition (basic residues). Positions 1–24 (MLQPKRRKYRKEQKGRNTGKATRG) are disordered.

This sequence belongs to the universal ribosomal protein uL16 family. As to quaternary structure, part of the 50S ribosomal subunit.

Its function is as follows. Binds 23S rRNA and is also seen to make contacts with the A and possibly P site tRNAs. This is Large ribosomal subunit protein uL16 from Cupriavidus necator (strain ATCC 17699 / DSM 428 / KCTC 22496 / NCIMB 10442 / H16 / Stanier 337) (Ralstonia eutropha).